The chain runs to 275 residues: 3-methyl-2-oxobutanoate hydroxymethyltransferase (275 aa).

Residues aspartate 49 and aspartate 88 each coordinate Mg(2+). Residues aspartate 49 to serine 50, aspartate 88, and lysine 118 each bind 3-methyl-2-oxobutanoate. Glutamate 120 serves as a coordination point for Mg(2+). Residue glutamate 187 is the Proton acceptor of the active site.

The protein belongs to the PanB family. Homodecamer; pentamer of dimers. It depends on Mg(2+) as a cofactor.

It is found in the cytoplasm. It carries out the reaction 3-methyl-2-oxobutanoate + (6R)-5,10-methylene-5,6,7,8-tetrahydrofolate + H2O = 2-dehydropantoate + (6S)-5,6,7,8-tetrahydrofolate. It functions in the pathway cofactor biosynthesis; (R)-pantothenate biosynthesis; (R)-pantoate from 3-methyl-2-oxobutanoate: step 1/2. Its function is as follows. Catalyzes the reversible reaction in which hydroxymethyl group from 5,10-methylenetetrahydrofolate is transferred onto alpha-ketoisovalerate to form ketopantoate. This is 3-methyl-2-oxobutanoate hydroxymethyltransferase from Rhodospirillum centenum (strain ATCC 51521 / SW).